We begin with the raw amino-acid sequence, 63 residues long: Large ribosomal subunit protein uL29 (63 aa).

Belongs to the universal ribosomal protein uL29 family.

In Bordetella petrii (strain ATCC BAA-461 / DSM 12804 / CCUG 43448), this protein is Large ribosomal subunit protein uL29.